The sequence spans 137 residues: Universal stress protein in QAH/OAS sulfhydrylase 3'region (137 aa).

It belongs to the universal stress protein A family.

The polypeptide is Universal stress protein in QAH/OAS sulfhydrylase 3'region (Thermus aquaticus).